A 381-amino-acid chain; its full sequence is Alkanesulfonate monooxygenase (381 aa).

This sequence belongs to the SsuD family. Homotetramer.

It carries out the reaction an alkanesulfonate + FMNH2 + O2 = an aldehyde + FMN + sulfite + H2O + 2 H(+). Functionally, catalyzes the desulfonation of aliphatic sulfonates. This Citrobacter koseri (strain ATCC BAA-895 / CDC 4225-83 / SGSC4696) protein is Alkanesulfonate monooxygenase.